Reading from the N-terminus, the 350-residue chain is tRNA uridine(34) hydroxylase (350 aa).

In terms of domain architecture, Rhodanese spans Asp146 to Leu240. Residue Cys200 is the Cysteine persulfide intermediate of the active site. Residues Gln318–Glu350 are disordered.

Belongs to the TrhO family.

It carries out the reaction uridine(34) in tRNA + AH2 + O2 = 5-hydroxyuridine(34) in tRNA + A + H2O. Its function is as follows. Catalyzes oxygen-dependent 5-hydroxyuridine (ho5U) modification at position 34 in tRNAs. The sequence is that of tRNA uridine(34) hydroxylase from Salmonella arizonae (strain ATCC BAA-731 / CDC346-86 / RSK2980).